The sequence spans 137 residues: Large ribosomal subunit protein uL16c (137 aa).

The protein belongs to the universal ribosomal protein uL16 family. In terms of assembly, part of the 50S ribosomal subunit.

Its subcellular location is the plastid. It localises to the chloroplast. This is Large ribosomal subunit protein uL16c from Bigelowiella natans (Pedinomonas minutissima).